The sequence spans 286 residues: Thymidylate synthase (286 aa).

140–141 (RR) provides a ligand contact to dUMP. The Nucleophile role is filled by cysteine 161. DUMP is bound by residues 185–188 (RSND), asparagine 196, and 226–228 (HIY). Aspartate 188 serves as a coordination point for (6R)-5,10-methylene-5,6,7,8-tetrahydrofolate. (6R)-5,10-methylene-5,6,7,8-tetrahydrofolate is bound at residue alanine 285.

It belongs to the thymidylate synthase family. Bacterial-type ThyA subfamily. In terms of assembly, homodimer.

Its subcellular location is the cytoplasm. It carries out the reaction dUMP + (6R)-5,10-methylene-5,6,7,8-tetrahydrofolate = 7,8-dihydrofolate + dTMP. It participates in pyrimidine metabolism; dTTP biosynthesis. Its function is as follows. Catalyzes the reductive methylation of 2'-deoxyuridine-5'-monophosphate (dUMP) to 2'-deoxythymidine-5'-monophosphate (dTMP) while utilizing 5,10-methylenetetrahydrofolate (mTHF) as the methyl donor and reductant in the reaction, yielding dihydrofolate (DHF) as a by-product. This enzymatic reaction provides an intracellular de novo source of dTMP, an essential precursor for DNA biosynthesis. The polypeptide is Thymidylate synthase (Streptococcus thermophilus (strain CNRZ 1066)).